The chain runs to 151 residues: Glutamate mutase sigma subunit 1 (151 aa).

A B12-binding domain is found at 7-140 (PRTVILGVIG…EMLREDLQLT (134 aa)). Adenosylcob(III)alamin-binding positions include 17 to 21 (SDAHV), His20, 65 to 67 (SSL), and 96 to 100 (NLAVG).

The protein belongs to the methylaspartate mutase GlmS subunit family. In terms of assembly, heterotetramer composed of 2 epsilon subunits (GlmE) and 2 sigma subunits (GlmS). GlmE exists as a homodimer and GlmS as a monomer. Adenosylcob(III)alamin serves as cofactor.

It carries out the reaction (2S,3S)-3-methyl-L-aspartate = L-glutamate. It participates in amino-acid degradation; L-glutamate degradation via mesaconate pathway; acetate and pyruvate from L-glutamate: step 1/4. In terms of biological role, catalyzes the carbon skeleton rearrangement of L-glutamate to L-threo-3-methylaspartate ((2S,3S)-3-methylaspartate). The chain is Glutamate mutase sigma subunit 1 from Haloarcula marismortui (strain ATCC 43049 / DSM 3752 / JCM 8966 / VKM B-1809) (Halobacterium marismortui).